We begin with the raw amino-acid sequence, 495 residues long: UPF0371 protein cgR_2887 (495 aa).

It belongs to the UPF0371 family.

The sequence is that of UPF0371 protein cgR_2887 from Corynebacterium glutamicum (strain R).